The following is a 65-amino-acid chain: Small, acid-soluble spore protein C3 (65 aa).

This sequence belongs to the alpha/beta-type SASP family.

Functionally, SASP are bound to spore DNA. They are double-stranded DNA-binding proteins that cause DNA to change to an a-like conformation. They protect the DNA backbone from chemical and enzymatic cleavage and are thus involved in dormant spore's high resistance to UV light. This Priestia megaterium (Bacillus megaterium) protein is Small, acid-soluble spore protein C3 (SASP-C3).